The primary structure comprises 180 residues: Large ribosomal subunit protein uL5 (180 aa).

Belongs to the universal ribosomal protein uL5 family. As to quaternary structure, part of the 50S ribosomal subunit; part of the 5S rRNA/L5/L18/L25 subcomplex. Contacts the 5S rRNA and the P site tRNA. Forms a bridge to the 30S subunit in the 70S ribosome.

This is one of the proteins that bind and probably mediate the attachment of the 5S RNA into the large ribosomal subunit, where it forms part of the central protuberance. In the 70S ribosome it contacts protein S13 of the 30S subunit (bridge B1b), connecting the 2 subunits; this bridge is implicated in subunit movement. Contacts the P site tRNA; the 5S rRNA and some of its associated proteins might help stabilize positioning of ribosome-bound tRNAs. This chain is Large ribosomal subunit protein uL5, found in Symbiobacterium thermophilum (strain DSM 24528 / JCM 14929 / IAM 14863 / T).